The chain runs to 837 residues: Protein translocase subunit SecA 1 (837 aa).

Residues glutamine 85, 103 to 107 (GEGKT), and aspartate 492 each bind ATP. Basic and acidic residues predominate over residues 787-806 (QEVAKGEAVHPKEDGEEPKR). The tract at residues 787-811 (QEVAKGEAVHPKEDGEEPKRKPVRK) is disordered. Zn(2+) contacts are provided by cysteine 821, cysteine 823, cysteine 832, and cysteine 833.

This sequence belongs to the SecA family. Monomer and homodimer. Part of the essential Sec protein translocation apparatus which comprises SecA, SecYEG and auxiliary proteins SecDF. Other proteins may also be involved. Requires Zn(2+) as cofactor.

It localises to the cell membrane. The protein resides in the cytoplasm. The enzyme catalyses ATP + H2O + cellular proteinSide 1 = ADP + phosphate + cellular proteinSide 2.. Part of the Sec protein translocase complex. Interacts with the SecYEG preprotein conducting channel. Has a central role in coupling the hydrolysis of ATP to the transfer of proteins into and across the cell membrane, serving as an ATP-driven molecular motor driving the stepwise translocation of polypeptide chains across the membrane. The chain is Protein translocase subunit SecA 1 from Geobacillus kaustophilus (strain HTA426).